The chain runs to 231 residues: Acyltransferase PGAP2 (231 aa).

At 1–22 the chain is on the cytoplasmic side; the sequence is MQQVPYGSVDRDKPLIRVPFTR. Residues 23–43 traverse the membrane as a helical segment; that stretch reads LAVITVCLPLLGLVACIVLAM. At 44-78 the chain is on the lumenal side; it reads LYHYNDATYTHCQVPNYLPSISAAISLTPERYIWR. Residues 79 to 99 traverse the membrane as a helical segment; it reads FSIGLHSAPRFLVAAAYLSFY. Residues 100 to 110 lie on the Cytoplasmic side of the membrane; the sequence is RGRFSRRLTEQ. Residues 111–131 form a helical membrane-spanning segment; it reads LLSGFTFLLALSENVGLLLLT. The Lumenal segment spans residues 132 to 146; that stretch reads YVSSTETYSVHKSGF. The helical transmembrane segment at 147–167 threads the bilayer; sequence ILFIGSSLFHMLCTCKLWSLI. The Cytoplasmic segment spans residues 168–179; it reads VKYSISSEEMMS. The helical transmembrane segment at 180 to 200 threads the bilayer; the sequence is YWFKLRLFLFNGGCCVLAVYF. The Lumenal portion of the chain corresponds to 201-231; that stretch reads YRRHNTYCEEGITHASRCVSIWWCCPTWPST.

This sequence belongs to the PGAP2 family.

The protein localises to the golgi apparatus membrane. Involved in the fatty acid remodeling steps of GPI-anchor maturation where the unsaturated acyl chain at sn-2 of inositol phosphate is replaced by a saturated stearoyl chain. May catalyze the second step of the fatty acid remodeling, by reacylating a lyso-GPI intermediate at sn-2 of inositol phosphate by a saturated chain. The fatty acid remodeling steps is critical for the integration of GPI-APs into lipid rafts. This Danio rerio (Zebrafish) protein is Acyltransferase PGAP2.